Here is a 256-residue protein sequence, read N- to C-terminus: MLKIVILLSAVVCALGGTVPEGLLPQLDGRIVGGSATTISSFPWQISLQRSGSHSCGGSVYSANIIVTAAHCLQSVSASSLQVRAGSTYWSSGGVVAKVAAFRNHEGYNANTMVNDIAVIRLSSSLSFSSSIKAIALATYNPANGAAAAVSGWGTQSSGSNSIPSQLQYVNVNIVSQSKCASSAYGYGSEIRNTMICAAASGKDACQGDSGGPLVSGGVLVGVVSWGYGCAYSNYPGVYADVAVLRSWVISTANSI.

The signal sequence occupies residues 1 to 22 (MLKIVILLSAVVCALGGTVPEG). Positions 23 to 30 (LLPQLDGR) are cleaved as a propeptide — activation peptide. The Peptidase S1 domain occupies 31–254 (IVGGSATTIS…LRSWVISTAN (224 aa)). Residues Cys56 and Cys72 are joined by a disulfide bond. Catalysis depends on charge relay system residues His71 and Asp116. 2 disulfide bridges follow: Cys180–Cys197 and Cys206–Cys230. The active-site Charge relay system is the Ser210.

The protein belongs to the peptidase S1 family.

It localises to the secreted. It is found in the extracellular space. The catalysed reaction is Preferential cleavage: Arg-|-Xaa, Lys-|-Xaa.. This chain is Trypsin alpha (alphaTry), found in Drosophila erecta (Fruit fly).